The following is a 309-amino-acid chain: MSGYNPQNPKELKDVILRRLGAPIINVELTPDQIYDCIQRALELYGEYHFDGLNKGFHVFYVGDDEERYKTGVFDLRGSNVFAVTRILRTNIGSITSMDGNATYPWFTDFLLGMAGINGGMGTSCNRFYGPNAFGADLGYFTQLTSYMGMMQDMLSPIPDFWFNSANEQLKVMGNFQKYDLIIVESWTKSYIDTNKMVGNTVGYGTVGPQDSWSLSERYNNPDHNLVGRVVGQDPNVKQGAYNNRWVKDYATALAKELNGQILARHQGMMLPGGVTIDGQRLIEEARLEKEALREELYLLDPPFGILVG.

As to quaternary structure, gp13 and gp14 form a hetero-oligomer complex with a stoichiometry of 10:5.

It localises to the virion. Plays a role in the association of the virion head and tail after packaging of viral DNA within the head. Together with gp14, forms a neck at the portal vertex of the head to be ready for the tail attachment. This chain is Neck protein gp13 (13), found in Escherichia coli (Bacteriophage T4).